The chain runs to 285 residues: Probable endonuclease 4 (285 aa).

Residues histidine 69, histidine 109, glutamate 145, aspartate 179, histidine 182, histidine 216, aspartate 229, histidine 231, and glutamate 261 each contribute to the Zn(2+) site.

Belongs to the AP endonuclease 2 family. The cofactor is Zn(2+).

The catalysed reaction is Endonucleolytic cleavage to 5'-phosphooligonucleotide end-products.. Endonuclease IV plays a role in DNA repair. It cleaves phosphodiester bonds at apurinic or apyrimidinic (AP) sites, generating a 3'-hydroxyl group and a 5'-terminal sugar phosphate. The chain is Probable endonuclease 4 from Escherichia coli (strain SMS-3-5 / SECEC).